Consider the following 615-residue polypeptide: Prickle planar cell polarity protein 3 (615 aa).

The segment covering 1–12 (MFARGSRRRRSG) has biased composition (basic residues). The interval 1–26 (MFARGSRRRRSGRAPPEAEDPDRGQP) is disordered. One can recognise a PET domain in the interval 74 to 182 (SDFQRHSISD…IVRIFPVTIT (109 aa)). LIM zinc-binding domains follow at residues 184 to 249 (AICE…CLRP), 250 to 309 (RCQA…RHAE), and 310 to 373 (YCDG…SEPT). Disordered stretches follow at residues 396–567 (ASFS…LGER) and 587–615 (TFNSPSLSLPRDSRAGMPRQARDKNCIVA). Residues 405 to 415 (SETTTKGTSTE) show a composition bias toward polar residues. Serine 475 and serine 491 each carry phosphoserine. A compositionally biased stretch (basic residues) spans 508–531 (PSRRRHHHHNHHHHHNRHPSRRRH). Over residues 537 to 555 (GSGSDSESCSSSPSSSSSE) the composition is skewed to low complexity. The segment covering 606–615 (QARDKNCIVA) has biased composition (basic and acidic residues).

Belongs to the prickle / espinas / testin family. In terms of assembly, interacts with VANGL2 via its C-terminus. The VANGL2-dependent membrane recruitment of PRICKLE3 is a prerequisite for its polarization. Interacts with WTIP. WTIP is involved in the recruitment of PRICKLE3 to the basal body. Interacts with MT-ATP8, a component of the mitochondrial complex V. Widely expressed.

It is found in the cytoplasm. Its subcellular location is the cell membrane. The protein resides in the mitochondrion. Functionally, involved in the planar cell polarity (PCP) pathway that is essential for the polarization of epithelial cells during morphogenetic processes, including gastrulation and neurulation. PCP is maintained by two molecular modules, the global and the core modules, PRICKLE3 being part of the core module. Distinct complexes of the core module segregate to opposite sides of the cell, where they interact with the opposite complex in the neighboring cell at or near the adherents junctions. Involved in the organization of the basal body. Involved in cilia growth and positioning. Required for proper assembly, stability, and function of mitochondrial membrane ATP synthase (mitochondrial complex V). In Homo sapiens (Human), this protein is Prickle planar cell polarity protein 3.